A 506-amino-acid polypeptide reads, in one-letter code: Kynurenine 3-monooxygenase (506 aa).

It belongs to the aromatic-ring hydroxylase family. KMO subfamily. The cofactor is FAD.

It localises to the mitochondrion outer membrane. The enzyme catalyses L-kynurenine + NADPH + O2 + H(+) = 3-hydroxy-L-kynurenine + NADP(+) + H2O. The protein operates within cofactor biosynthesis; NAD(+) biosynthesis; quinolinate from L-kynurenine: step 1/3. Catalyzes the hydroxylation of L-kynurenine (L-Kyn) to form 3-hydroxy-L-kynurenine (L-3OHKyn). Required for synthesis of quinolinic acid. The sequence is that of Kynurenine 3-monooxygenase (bna4) from Emericella nidulans (strain FGSC A4 / ATCC 38163 / CBS 112.46 / NRRL 194 / M139) (Aspergillus nidulans).